Here is a 40-residue protein sequence, read N- to C-terminus: Thioredoxin (40 aa).

A disulfide bridge connects residues Cys29 and Cys32.

The protein belongs to the thioredoxin family.

In terms of biological role, participates in various redox reactions through the reversible oxidation of its active center dithiol to a disulfide and catalyzes dithiol-disulfide exchange reactions. This Clostridium sporogenes protein is Thioredoxin (trxA).